Reading from the N-terminus, the 638-residue chain is Sorting nexin-41 (638 aa).

Positions 1 to 14 (MDSDTSPNPFASSP) are enriched in low complexity. The interval 1-69 (MDSDTSPNPF…MGATVPGPKP (69 aa)) is disordered. The segment covering 15–30 (PSSPSPRPSLPPPVPR) has biased composition (pro residues). In terms of domain architecture, PX spans 84–201 (GEQVHIVDAL…HRFLEEDVSW (118 aa)). A 1,2-diacyl-sn-glycero-3-phospho-(1D-myo-inositol-3-phosphate)-binding residues include R118, S120, K144, and R168. Disordered regions lie at residues 215-239 (KNPL…SEAP), 408-432 (LERG…RERA), and 545-638 (PHPN…LGPL). Residues 225–239 (PTFQPTTPTSPSEAP) are compositionally biased toward low complexity. Over residues 423–432 (EAARDERERA) the composition is skewed to basic and acidic residues. A compositionally biased stretch (low complexity) spans 552-562 (QTQTQVQSQQS). The segment covering 585–601 (MKNEIERVEIEIADKPL) has biased composition (basic and acidic residues).

It belongs to the sorting nexin family.

Its subcellular location is the endosome membrane. It localises to the endomembrane system. In terms of biological role, may be required for cytoplasm to vacuole transport (Cvt) and pexophagy. In Cryptococcus neoformans var. neoformans serotype D (strain JEC21 / ATCC MYA-565) (Filobasidiella neoformans), this protein is Sorting nexin-41 (SNX41).